The following is an 868-amino-acid chain: mRNA-capping enzyme (868 aa).

The active-site N6-GMP-lysine intermediate is the Lys-282. Residues 594 to 868 (GIYRAQTALI…LFGFICLRKN (275 aa)) form the mRNA cap 0 methyltransferase domain. S-adenosyl-L-methionine contacts are provided by residues Lys-607, Gly-624, Asp-646, and 710–712 (LFI).

The protein in the N-terminal section; belongs to the dsDNA virus mRNA guanylyltransferase family. In the C-terminal section; belongs to the class I-like SAM-binding methyltransferase superfamily. mRNA cap 0 methyltransferase family. As to quaternary structure, part of the viral DNA-directed RNA polymerase that consists of 8 polII-like subunits (RPB1, RPB2, RPB3, RPB5, RPB6, RPB7, RPB9, RPB10), a capping enzyme and a termination factor.

It is found in the virion. The catalysed reaction is a 5'-end triphospho-ribonucleoside in mRNA + H2O = a 5'-end diphospho-ribonucleoside in mRNA + phosphate + H(+). The enzyme catalyses a 5'-end diphospho-ribonucleoside in mRNA + GTP + H(+) = a 5'-end (5'-triphosphoguanosine)-ribonucleoside in mRNA + diphosphate. It carries out the reaction a 5'-end (5'-triphosphoguanosine)-ribonucleoside in mRNA + S-adenosyl-L-methionine = a 5'-end (N(7)-methyl 5'-triphosphoguanosine)-ribonucleoside in mRNA + S-adenosyl-L-homocysteine. Its pathway is mRNA processing; mRNA capping. In terms of biological role, probably catalyzes the second reaction in the mRNA cap formation pathway. Forms a covalent complex with GTP. The chain is mRNA-capping enzyme from Ornithodoros (relapsing fever ticks).